The sequence spans 286 residues: Bifunctional protein FolD (286 aa).

NADP(+) contacts are provided by residues 165–167 (GRS), serine 190, and valine 231.

It belongs to the tetrahydrofolate dehydrogenase/cyclohydrolase family. Homodimer.

The catalysed reaction is (6R)-5,10-methylene-5,6,7,8-tetrahydrofolate + NADP(+) = (6R)-5,10-methenyltetrahydrofolate + NADPH. It carries out the reaction (6R)-5,10-methenyltetrahydrofolate + H2O = (6R)-10-formyltetrahydrofolate + H(+). It participates in one-carbon metabolism; tetrahydrofolate interconversion. Functionally, catalyzes the oxidation of 5,10-methylenetetrahydrofolate to 5,10-methenyltetrahydrofolate and then the hydrolysis of 5,10-methenyltetrahydrofolate to 10-formyltetrahydrofolate. This chain is Bifunctional protein FolD, found in Bacillus anthracis (strain A0248).